The primary structure comprises 372 residues: 4-hydroxy-3-methylbut-2-en-1-yl diphosphate synthase (flavodoxin) (372 aa).

The [4Fe-4S] cluster site is built by Cys270, Cys273, Cys305, and Glu312.

It belongs to the IspG family. It depends on [4Fe-4S] cluster as a cofactor.

The enzyme catalyses (2E)-4-hydroxy-3-methylbut-2-enyl diphosphate + oxidized [flavodoxin] + H2O + 2 H(+) = 2-C-methyl-D-erythritol 2,4-cyclic diphosphate + reduced [flavodoxin]. It participates in isoprenoid biosynthesis; isopentenyl diphosphate biosynthesis via DXP pathway; isopentenyl diphosphate from 1-deoxy-D-xylulose 5-phosphate: step 5/6. In terms of biological role, converts 2C-methyl-D-erythritol 2,4-cyclodiphosphate (ME-2,4cPP) into 1-hydroxy-2-methyl-2-(E)-butenyl 4-diphosphate. The chain is 4-hydroxy-3-methylbut-2-en-1-yl diphosphate synthase (flavodoxin) from Idiomarina loihiensis (strain ATCC BAA-735 / DSM 15497 / L2-TR).